Reading from the N-terminus, the 332-residue chain is MKIPGSVITLLIGVVITVVSLWYGQNHGLMPVAASADAEKVDGIFNYMMTIATGLFLLVEGVLVYCLIRFRRRKDDQTDGPPIEGNVPLEILWTAIPTVIVFTLAVYSFEVYNNLGGLDPTISRDNAGQQMAHNHMGHMGSMGNMVAMAGDGDVALGIGLDSEEQGVNPLMVDVKGIQYAWIFTYPETGIISGELHAPIDRPVQLNMEAGDVIHAFWIPQLRLKQDVIPGRGSTLVFNASTPGQYPVICAELCGAYHGGMKSVFYAHTPEEYDDWVAANAPAPTESMAMTLPKATTAMTPNEYLAPYAKEMGVQTEALAQLKDQTSPVGDLL.

Positions 1–20 (MKIPGSVITLLIGVVITVVS) are cleaved as a signal peptide. The next 2 membrane-spanning stretches (helical) occupy residues 48-68 (MMTI…YCLI) and 87-107 (VPLE…LAVY). Residues histidine 214, cysteine 249, cysteine 253, and histidine 257 each contribute to the Cu cation site.

It belongs to the cytochrome c oxidase subunit 2 family. Cu cation is required as a cofactor.

The protein resides in the cell membrane. It carries out the reaction 4 Fe(II)-[cytochrome c] + O2 + 8 H(+)(in) = 4 Fe(III)-[cytochrome c] + 2 H2O + 4 H(+)(out). Subunits I and II form the functional core of the enzyme complex. Electrons originating in cytochrome c are transferred via heme a and Cu(A) to the binuclear center formed by heme a3 and Cu(B). This is Cytochrome c oxidase subunit 2 (ctaC) from Synechocystis sp. (strain ATCC 27184 / PCC 6803 / Kazusa).